We begin with the raw amino-acid sequence, 118 residues long: UPF0102 protein Sde_3146 (118 aa).

The protein belongs to the UPF0102 family.

This Saccharophagus degradans (strain 2-40 / ATCC 43961 / DSM 17024) protein is UPF0102 protein Sde_3146.